Reading from the N-terminus, the 175-residue chain is Methylated-DNA--protein-cysteine methyltransferase (175 aa).

C142 acts as the Nucleophile; methyl group acceptor in catalysis.

Belongs to the MGMT family.

It is found in the cytoplasm. It carries out the reaction a 6-O-methyl-2'-deoxyguanosine in DNA + L-cysteinyl-[protein] = S-methyl-L-cysteinyl-[protein] + a 2'-deoxyguanosine in DNA. The enzyme catalyses a 4-O-methyl-thymidine in DNA + L-cysteinyl-[protein] = a thymidine in DNA + S-methyl-L-cysteinyl-[protein]. Involved in the cellular defense against the biological effects of O6-methylguanine (O6-MeG) and O4-methylthymine (O4-MeT) in DNA. Repairs the methylated nucleobase in DNA by stoichiometrically transferring the methyl group to a cysteine residue in the enzyme. This is a suicide reaction: the enzyme is irreversibly inactivated. The polypeptide is Methylated-DNA--protein-cysteine methyltransferase (Thermococcus sibiricus (strain DSM 12597 / MM 739)).